The sequence spans 199 residues: MSQSHFFAHLSRLKLINRWPLMRNVRTENVSEHSLQVAMVAHALAAIKNRKFNGNVNAERIALLAMYHDASEVLTGDLPTPVKYFNSQIAQEYKAIEKIAQQKLVDMVPEELRDIFAALIDEHQCSEEERLLVKQADALCAYLKCLEELSAGNNEFLLAKSRLEKTLESRRSEEMDYFMQVFVPSFQLSLDEISQDSPL.

Substrate is bound by residues 18–19 (RW) and His-33. An HD domain is found at 30–142 (VSEHSLQVAM…VKQADALCAY (113 aa)). His-33, His-68, and Asp-69 together coordinate a divalent metal cation. Substrate contacts are provided by residues Asp-69, 77 to 80 (DLPT), and Asp-137. An a divalent metal cation-binding site is contributed by Asp-137.

It belongs to the 5DNU family. In terms of assembly, homodimer. Requires a divalent metal cation as cofactor.

It localises to the cytoplasm. It catalyses the reaction a 2'-deoxyribonucleoside 5'-phosphate + H2O = a 2'-deoxyribonucleoside + phosphate. Its function is as follows. Catalyzes the strictly specific dephosphorylation of 2'-deoxyribonucleoside 5'-monophosphates. The chain is 5'-deoxynucleotidase Ent638_2835 from Enterobacter sp. (strain 638).